The chain runs to 121 residues: UPF0102 protein Syncc9902_1284 (121 aa).

The protein belongs to the UPF0102 family.

The chain is UPF0102 protein Syncc9902_1284 from Synechococcus sp. (strain CC9902).